A 395-amino-acid polypeptide reads, in one-letter code: Formate-dependent phosphoribosylglycinamide formyltransferase (395 aa).

N(1)-(5-phospho-beta-D-ribosyl)glycinamide-binding positions include 22–23 and glutamate 82; that span reads EL. ATP is bound by residues arginine 115, lysine 156, 161–166, 196–199, and glutamate 204; these read SSGKGQ and EGFI. An ATP-grasp domain is found at 120–309; that stretch reads RLAAETLGLP…EFALHARAIL (190 aa). The Mg(2+) site is built by glutamate 268 and glutamate 280. N(1)-(5-phospho-beta-D-ribosyl)glycinamide contacts are provided by residues aspartate 287, lysine 356, and 363 to 364; that span reads RR.

It belongs to the PurK/PurT family. In terms of assembly, homodimer.

It carries out the reaction N(1)-(5-phospho-beta-D-ribosyl)glycinamide + formate + ATP = N(2)-formyl-N(1)-(5-phospho-beta-D-ribosyl)glycinamide + ADP + phosphate + H(+). It participates in purine metabolism; IMP biosynthesis via de novo pathway; N(2)-formyl-N(1)-(5-phospho-D-ribosyl)glycinamide from N(1)-(5-phospho-D-ribosyl)glycinamide (formate route): step 1/1. Its function is as follows. Involved in the de novo purine biosynthesis. Catalyzes the transfer of formate to 5-phospho-ribosyl-glycinamide (GAR), producing 5-phospho-ribosyl-N-formylglycinamide (FGAR). Formate is provided by PurU via hydrolysis of 10-formyl-tetrahydrofolate. This Stenotrophomonas maltophilia (strain K279a) protein is Formate-dependent phosphoribosylglycinamide formyltransferase.